We begin with the raw amino-acid sequence, 104 residues long: MTEHNHNHDVELDISNEEELLTLFDENGNEVLYRKMLEFYHPEFKKEYVILAEEGAQSDDDDMIELIPMINEPDESGDGGKLVPIETDEEWDMIEEVVNTNMEE.

It belongs to the UPF0473 family.

The protein is UPF0473 protein SH1304 of Staphylococcus haemolyticus (strain JCSC1435).